Consider the following 250-residue polypeptide: NADH-quinone oxidoreductase subunit C (250 aa).

The protein belongs to the complex I 30 kDa subunit family. As to quaternary structure, NDH-1 is composed of 14 different subunits. Subunits NuoB, C, D, E, F, and G constitute the peripheral sector of the complex.

It is found in the cell inner membrane. The enzyme catalyses a quinone + NADH + 5 H(+)(in) = a quinol + NAD(+) + 4 H(+)(out). Its function is as follows. NDH-1 shuttles electrons from NADH, via FMN and iron-sulfur (Fe-S) centers, to quinones in the respiratory chain. The immediate electron acceptor for the enzyme in this species is believed to be ubiquinone. Couples the redox reaction to proton translocation (for every two electrons transferred, four hydrogen ions are translocated across the cytoplasmic membrane), and thus conserves the redox energy in a proton gradient. The sequence is that of NADH-quinone oxidoreductase subunit C from Xanthomonas campestris pv. campestris (strain 8004).